The primary structure comprises 282 residues: Biotin synthase (282 aa).

The Radical SAM core domain occupies 1 to 230 (MSDNKIYLCA…NQMLMIAGGR (230 aa)). 3 residues coordinate [4Fe-4S] cluster: C19, C23, and C26. 3 residues coordinate [2Fe-2S] cluster: C63, C98, and C156.

Belongs to the radical SAM superfamily. Biotin synthase family. In terms of assembly, homodimer. Requires [4Fe-4S] cluster as cofactor. [2Fe-2S] cluster is required as a cofactor.

The enzyme catalyses (4R,5S)-dethiobiotin + (sulfur carrier)-SH + 2 reduced [2Fe-2S]-[ferredoxin] + 2 S-adenosyl-L-methionine = (sulfur carrier)-H + biotin + 2 5'-deoxyadenosine + 2 L-methionine + 2 oxidized [2Fe-2S]-[ferredoxin]. It functions in the pathway cofactor biosynthesis; biotin biosynthesis; biotin from 7,8-diaminononanoate: step 2/2. Its function is as follows. Catalyzes the conversion of dethiobiotin (DTB) to biotin by the insertion of a sulfur atom into dethiobiotin via a radical-based mechanism. The sequence is that of Biotin synthase from Aliarcobacter butzleri (strain RM4018) (Arcobacter butzleri).